The primary structure comprises 155 residues: uncharacterized protein (155 aa).

The first 24 residues, 1 to 24 (MQQLSKRRLSALFVTAFLPVTAFA), serve as a signal peptide directing secretion.

This is an uncharacterized protein from Chromohalobacter salexigens (strain ATCC BAA-138 / DSM 3043 / CIP 106854 / NCIMB 13768 / 1H11).